The following is a 92-amino-acid chain: Small ribosomal subunit protein bS20 (92 aa).

The protein belongs to the bacterial ribosomal protein bS20 family.

Binds directly to 16S ribosomal RNA. The protein is Small ribosomal subunit protein bS20 of Rickettsia africae (strain ESF-5).